The chain runs to 644 residues: Exoribonuclease 2 (644 aa).

The region spanning 189 to 516 (RQDLTALNFV…NHRLLKAVIK (328 aa)) is the RNB domain. The 83-residue stretch at 561–643 (NTRFAAEIID…ETRSIIARPA (83 aa)) folds into the S1 motif domain.

This sequence belongs to the RNR ribonuclease family. RNase II subfamily.

It is found in the cytoplasm. It carries out the reaction Exonucleolytic cleavage in the 3'- to 5'-direction to yield nucleoside 5'-phosphates.. Involved in mRNA degradation. Hydrolyzes single-stranded polyribonucleotides processively in the 3' to 5' direction. The sequence is that of Exoribonuclease 2 from Salmonella dublin (strain CT_02021853).